The chain runs to 649 residues: Phospholipase A1 PLIP1, chloroplastic (649 aa).

Residues 1–67 constitute a chloroplast transit peptide; that stretch reads MAFNTAMAST…NNRILAVSVR (67 aa). The GXSXG signature appears at 420–424; that stretch reads GHSLG. Ser-422 acts as the Acyl-ester intermediate in catalysis. Active-site charge relay system residues include Asp-483 and His-593.

It belongs to the AB hydrolase superfamily. Lipase family.

Its subcellular location is the plastid. It localises to the chloroplast thylakoid membrane. The catalysed reaction is a 1,2-diacyl-sn-glycero-3-phosphocholine + H2O = a 2-acyl-sn-glycero-3-phosphocholine + a fatty acid + H(+). It carries out the reaction a 1,2-diacyl-3-O-(beta-D-galactosyl)-sn-glycerol + 2 H2O = 3-beta-D-galactosyl-sn-glycerol + 2 a fatty acid + 2 H(+). Functionally, sn-1-specific phospholipase A1 involved in seed oil biosynthesis. Hydrolyzes polyunsaturated acyl groups from a unique chloroplast-specific phosphatidylglycerol (PG) that contains 16:1 delta 3-trans as its second acyl group. The polyunsaturated acyl groups released by PLIP1 are exported from the chloroplast, reincorporated into phosphatidylcholine (PC), and ultimately enter seed triacylglycerol (TAG). In vitro, possesses broad substrate specificity. Can hydrolyze the galactolipid monogalactosyldiacylglycerol (MGDG), and the phoshpolipids phosphatidylcholine (PC), phosphatidylethanolamine (PE), phosphatidic acid (PA), phosphatidylserine (PS) phosphatidylglycerol (PG) and phosphatidylinositol (PI). The protein is Phospholipase A1 PLIP1, chloroplastic of Arabidopsis thaliana (Mouse-ear cress).